Consider the following 205-residue polypeptide: MTKRAEAKYKIDRRMGQNIWGRSKSPVNRREYGPGQHGQRRKGKLSDFGTQLKAKQKLKGYYGNISEKQFRKYYAEAIRMKGDSGDNLIGLLERRLDAVVYRAKFVPTVFASRQFINHGHIKVNGRRVNIASYQVRVGDVIEVKEASRQLTLVLEASQLAERDVPEYYDVDHGKMSAKVTRIPLPNEVPYPVIMEPNLVIEFYSR.

The interval 20-46 (WGRSKSPVNRREYGPGQHGQRRKGKLS) is disordered. The S4 RNA-binding domain occupies 94 to 157 (RRLDAVVYRA…RQLTLVLEAS (64 aa)).

The protein belongs to the universal ribosomal protein uS4 family. In terms of assembly, part of the 30S ribosomal subunit. Contacts protein S5. The interaction surface between S4 and S5 is involved in control of translational fidelity.

Its function is as follows. One of the primary rRNA binding proteins, it binds directly to 16S rRNA where it nucleates assembly of the body of the 30S subunit. With S5 and S12 plays an important role in translational accuracy. The protein is Small ribosomal subunit protein uS4 of Beijerinckia indica subsp. indica (strain ATCC 9039 / DSM 1715 / NCIMB 8712).